A 793-amino-acid polypeptide reads, in one-letter code: Toll-like receptor 2 type-1 (793 aa).

Residues Met-1 to Ala-25 form the signal peptide. Residues Ala-26–Ser-597 lie on the Extracellular side of the membrane. Cys-41 and Cys-47 form a disulfide bridge. Asn-48 is a glycosylation site (N-linked (GlcNAc...) asparagine). 6 LRR repeats span residues Lys-64–Lys-85, Asn-88–Ser-109, Lys-112–Pro-133, Ser-136–Ser-157, Asn-161–Gly-182, and Phe-185–Ser-206. N-linked (GlcNAc...) asparagine glycosylation is present at Asn-120. Residues Asn-161, Asn-195, Asn-254, and Asn-325 are each glycosylated (N-linked (GlcNAc...) asparagine). A disulfide bond links Cys-362 and Cys-391. LRR repeat units follow at residues Ser-370–Cys-391, Ser-397–Ile-418, Lys-423–Pro-444, Asn-446–Thr-467, Leu-468–Pro-486, Phe-487–Pro-508, and Asn-509–Ser-530. N-linked (GlcNAc...) asparagine glycosylation occurs at Asn-402. Cysteines 441 and 463 form a disulfide. Asn-451 carries an N-linked (GlcNAc...) asparagine glycan. The region spanning Asn-542–Arg-596 is the LRRCT domain. Residues Leu-598–Gly-618 form a helical membrane-spanning segment. At Tyr-619 to Ser-793 the chain is on the cytoplasmic side. A TIR domain is found at Ile-648–Leu-791.

Belongs to the Toll-like receptor family. Binds MYD88 (via TIR domain). In terms of processing, N-glycosylated. TLR2-1 is more heavily glycosylated than TLR2-2. In terms of tissue distribution, highly expressed in ovary. Detected at lower levels in heart, lung, gizzard and testis.

The protein localises to the membrane. Participates in the innate immune response to microbial agents. Acts via MYD88 and TRAF6, leading to NF-kappa-B activation, cytokine secretion and the inflammatory response. Does not respond to LPS and responds with less ability than TLR2-2 to mycoplasmal macrophage-activating lipopeptide-2kD (MALP-2). This chain is Toll-like receptor 2 type-1 (TLR2-1), found in Gallus gallus (Chicken).